Here is a 358-residue protein sequence, read N- to C-terminus: Peptide chain release factor 1 (358 aa).

The residue at position 233 (Q233) is an N5-methylglutamine.

It belongs to the prokaryotic/mitochondrial release factor family. Methylated by PrmC. Methylation increases the termination efficiency of RF1.

The protein resides in the cytoplasm. Functionally, peptide chain release factor 1 directs the termination of translation in response to the peptide chain termination codons UAG and UAA. This Staphylococcus carnosus (strain TM300) protein is Peptide chain release factor 1.